Consider the following 302-residue polypeptide: Protoheme IX farnesyltransferase (302 aa).

Transmembrane regions (helical) follow at residues 24–44 (VVSL…FSGY), 48–68 (FFSV…AGAL), 97–117 (AALV…ELAV), 120–140 (LSAV…TVYL), 147–167 (NIVV…AAVA), 174–194 (SLVL…ALAL), 221–241 (ILCY…LRFS), 245–265 (YMIV…NVYL), and 282–302 (FLLF…GMLI).

Belongs to the UbiA prenyltransferase family. Protoheme IX farnesyltransferase subfamily.

It is found in the cell inner membrane. It catalyses the reaction heme b + (2E,6E)-farnesyl diphosphate + H2O = Fe(II)-heme o + diphosphate. The protein operates within porphyrin-containing compound metabolism; heme O biosynthesis; heme O from protoheme: step 1/1. Its function is as follows. Converts heme B (protoheme IX) to heme O by substitution of the vinyl group on carbon 2 of heme B porphyrin ring with a hydroxyethyl farnesyl side group. This is Protoheme IX farnesyltransferase from Neorickettsia sennetsu (strain ATCC VR-367 / Miyayama) (Ehrlichia sennetsu).